The primary structure comprises 405 residues: Dynactin subunit 2 (405 aa).

Residues 1 to 24 form a disordered region; it reads MADPKYADLPGIARNEPDVYETSD. A coiled-coil region spans residues 101–134; the sequence is PQQKYQRLLHEIQELTQEVEKAQSTVKESAAEEK. The disordered stretch occupies residues 186-207; that stretch reads AKTRKNPEGKSPAKGPGPDNEN. Residues 383–403 adopt a coiled-coil conformation; the sequence is KENLATVEDNFTSIDARIKKL.

Belongs to the dynactin subunit 2 family. Subunit of dynactin, a multiprotein complex part of a tripartite complex with dynein and a adapter, such as BICDL1, BICD2 or HOOK3. The dynactin complex is built around ACTR1A/ACTB filament and consists of an actin-related filament composed of a shoulder domain, a pointed end and a barbed end. Its length is defined by its flexible shoulder domain. The soulder is composed of 2 DCTN1 subunits, 4 DCTN2 and 2 DCTN3.

The protein resides in the cytoplasm. It is found in the cytoskeleton. Its subcellular location is the microtubule organizing center. The protein localises to the centrosome. It localises to the membrane. Functionally, part of the dynactin complex that activates the molecular motor dynein for ultra-processive transport along microtubules. In the dynactin soulder domain, binds the ACTR1A filament and acts as a molecular ruler to determine the length. Modulates cytoplasmic dynein binding to an organelle, and plays a role in prometaphase chromosome alignment and spindle organization during mitosis. Involved in anchoring microtubules to centrosomes. The sequence is that of Dynactin subunit 2 (dctn2) from Xenopus tropicalis (Western clawed frog).